The chain runs to 407 residues: Dual-specificity RNA methyltransferase RlmN (407 aa).

Glutamate 136 serves as the catalytic Proton acceptor. Residues 144–378 (REDRGAVCIS…MDAGFASPIR (235 aa)) enclose the Radical SAM core domain. Cysteine 151 and cysteine 389 are joined by a disulfide. Residues cysteine 158, cysteine 162, and cysteine 165 each coordinate [4Fe-4S] cluster. S-adenosyl-L-methionine is bound by residues 215–216 (GE), serine 247, 269–271 (SLH), and asparagine 346. Cysteine 389 functions as the S-methylcysteine intermediate in the catalytic mechanism.

Belongs to the radical SAM superfamily. RlmN family. The cofactor is [4Fe-4S] cluster.

The protein resides in the cytoplasm. The catalysed reaction is adenosine(2503) in 23S rRNA + 2 reduced [2Fe-2S]-[ferredoxin] + 2 S-adenosyl-L-methionine = 2-methyladenosine(2503) in 23S rRNA + 5'-deoxyadenosine + L-methionine + 2 oxidized [2Fe-2S]-[ferredoxin] + S-adenosyl-L-homocysteine. The enzyme catalyses adenosine(37) in tRNA + 2 reduced [2Fe-2S]-[ferredoxin] + 2 S-adenosyl-L-methionine = 2-methyladenosine(37) in tRNA + 5'-deoxyadenosine + L-methionine + 2 oxidized [2Fe-2S]-[ferredoxin] + S-adenosyl-L-homocysteine. Specifically methylates position 2 of adenine 2503 in 23S rRNA and position 2 of adenine 37 in tRNAs. m2A2503 modification seems to play a crucial role in the proofreading step occurring at the peptidyl transferase center and thus would serve to optimize ribosomal fidelity. This chain is Dual-specificity RNA methyltransferase RlmN, found in Gluconobacter oxydans (strain 621H) (Gluconobacter suboxydans).